A 98-amino-acid chain; its full sequence is QDEKRPRTAFTGDQLARLKREFSENKYLTEQRRTCLAKELNLNESQIKIWFQNKRAKMKKASGVKNQLALQLMAQGLYNHSSSSSSSSSSSSSIFLLA.

Residues 3 to 62 constitute a DNA-binding region (homeobox); it reads EKRPRTAFTGDQLARLKREFSENKYLTEQRRTCLAKELNLNESQIKIWFQNKRAKMKKAS. A disordered region spans residues 79–98; sequence NHSSSSSSSSSSSSSIFLLA. A compositionally biased stretch (low complexity) spans 81-98; that stretch reads SSSSSSSSSSSSSIFLLA.

Belongs to the engrailed homeobox family. In terms of processing, phosphorylated in the Ser-rich domain.

The protein localises to the nucleus. Its function is as follows. This protein specifies the body segmentation pattern. The polypeptide is Homeobox protein Ht-En (HT-EN) (Helobdella triserialis (Leech)).